Here is an 853-residue protein sequence, read N- to C-terminus: Protein translocase subunit SecA (853 aa).

Residues glutamine 77, 95-99 (GEGKT), and aspartate 532 each bind ATP.

The protein belongs to the SecA family. As to quaternary structure, monomer and homodimer. Part of the essential Sec protein translocation apparatus which comprises SecA, SecYEG and auxiliary proteins SecDF. Other proteins may also be involved.

Its subcellular location is the cell inner membrane. The protein resides in the cytoplasm. The enzyme catalyses ATP + H2O + cellular proteinSide 1 = ADP + phosphate + cellular proteinSide 2.. Functionally, part of the Sec protein translocase complex. Interacts with the SecYEG preprotein conducting channel. Has a central role in coupling the hydrolysis of ATP to the transfer of proteins into and across the cell membrane, serving as an ATP-driven molecular motor driving the stepwise translocation of polypeptide chains across the membrane. The chain is Protein translocase subunit SecA from Thermosipho melanesiensis (strain DSM 12029 / CIP 104789 / BI429).